Reading from the N-terminus, the 383-residue chain is Delta(12) acyl-lipid conjugase (11E,13E-forming) (383 aa).

A disordered region spans residues 1 to 30 (MGEVGPTNRTKTKLDKQQESENRVPHEPPP). A compositionally biased stretch (basic and acidic residues) spans 12–26 (TKLDKQQESENRVPH). Transmembrane regions (helical) follow at residues 56-76 (VIHD…YIPM) and 84-104 (VAWP…LVLG). Residues 105–109 (HECGH) carry the Histidine box-1 motif. The Histidine box-2 signature appears at 141 to 145 (HRRHH). Transmembrane regions (helical) follow at residues 179–199 (FLMI…FNAN), 225–245 (VIAS…IALA), and 249–269 (VWLI…IVLI). Positions 315 to 319 (HLVHH) match the Histidine box-3 motif.

Belongs to the fatty acid desaturase type 1 family. As to expression, expressed in developing seeds, but not in leaves.

Its subcellular location is the membrane. The enzyme catalyses a (9Z,12Z)-octadecadienoyl-containing glycerolipid + 2 Fe(II)-[cytochrome b5] + O2 + 2 H(+) = a (9Z,11E,13E)-octadecatrienoyl-containing glycerolipid + 2 Fe(III)-[cytochrome b5] + 2 H2O. The catalysed reaction is (9Z,12Z,15Z)-octadecatrienoyl-containing glycerolipid + 2 Fe(II)-[cytochrome b5] + O2 + 2 H(+) = a (9Z,11E,13E,15Z)-octadecatetraenoyl-containing glycerolipid + 2 Fe(III)-[cytochrome b5] + 2 H2O. The protein operates within lipid metabolism; polyunsaturated fatty acid biosynthesis. Converts linoleic acid to alpha-eleostearic acid (18:3(9Z,11E,13E)) and alpha-linolenic acid to alpha-parinaric acid (18:4(9Z,11E, 13E, 15Z)). Converts a single cis double bond at carbon 12 to two conjugated trans bonds at positions 11 and 13. In Impatiens balsamina (Balsam), this protein is Delta(12) acyl-lipid conjugase (11E,13E-forming).